The chain runs to 96 residues: Bacterial microcompartment shell protein EutM (96 aa).

The 85-residue stretch at 3 to 87 (ALGMIETRGL…PHGDLEEVFP (85 aa)) folds into the BMC domain.

This sequence belongs to the bacterial microcompartments protein family. Homohexamer with a central pore of up to 8.6 Angstroms diameter. The hexamers pack into a two-dimensional array. Interacts with EutQ; a probably cytoplasm-facing helix (Val-49 to Gln-64) interacts with N-terminus of EutQ.

The protein resides in the bacterial microcompartment. The protein operates within amine and polyamine degradation; ethanolamine degradation. Functionally, probably a major component of the bacterial microcompartment (BMC) shell dedicated to ethanolamine degradation. Each homohexamer has a central pore with an opening of up to 8.6 Angstroms. A positively-charged funnel leads to the pore from each side of the hexamer. The pore probably allows metabolite passage into and out of the BMC. Expression of eutK, eutL, eutM, eutN, eutS (eutSMNLK) in E.coli leads to formation of a single BMC. Expression alone leads to thick filaments that interfere with cell separation. Coexpression of eutQ with eutSMNLK permits E.coli to make cells with more than one mobile BMC, as is usual in vivo. May play a role in BMC shell biogenesis. Can replace homolog pduA in the pdu operon, cells grow better than wild-type on 1,2-propanediol and vitamin B12. Protein is incorporated into the pdu BMC microcompartment. The ethanolamine (EA) catabolic bacterial microcompartment (BMC) probably concentrates low levels of ethanolamine catabolic enzymes, concentrates volatile reaction intermediates, keeps the level of toxic acetaldehyde low, generates enough acetyl-CoA to support cell growth, and maintains a pool of free coenzyme A (CoA) and NAD. Deletion of BMC genes (eutK, eutL, eutM) restores growth of eutD deletions, suggesting there are dedicated pools of coenzyme A (CoA) and NAD in the BMC. In terms of biological role, expression of the eut operon allows this bacteria to use ethanolamine as a carbon, nitrogen and energy source. It relies on cobalamin (vitamin B12) both as a cofactor for the ethanolamine ammonia-lyase (EAL) activity and to induce the operon. EA enhances bacterial survival in macrophages in a concentration-dependent manner, suggesting it is an important nutrient during infection. This chain is Bacterial microcompartment shell protein EutM, found in Salmonella typhimurium (strain LT2 / SGSC1412 / ATCC 700720).